The chain runs to 399 residues: Elongation factor Tu (399 aa).

The region spanning 10–208 is the tr-type G domain; it reads KPHVNIGTIG…TVDSYIPEPE (199 aa). Residues 19 to 26 form a G1 region; that stretch reads GHVDHGKT. Residue 19-26 coordinates GTP; sequence GHVDHGKT. Residue Thr-26 participates in Mg(2+) binding. The interval 64–68 is G2; sequence GITIN. The tract at residues 85–88 is G3; that stretch reads DAPG. GTP-binding positions include 85–89 and 140–143; these read DAPGH and NKVD. The segment at 140 to 143 is G4; sequence NKVD. A G5 region spans residues 178–180; sequence SAL.

Belongs to the TRAFAC class translation factor GTPase superfamily. Classic translation factor GTPase family. EF-Tu/EF-1A subfamily. As to quaternary structure, monomer.

It is found in the cytoplasm. It catalyses the reaction GTP + H2O = GDP + phosphate + H(+). In terms of biological role, GTP hydrolase that promotes the GTP-dependent binding of aminoacyl-tRNA to the A-site of ribosomes during protein biosynthesis. In Streptococcus pyogenes serotype M12 (strain MGAS2096), this protein is Elongation factor Tu.